Reading from the N-terminus, the 527-residue chain is MAGGQLNVLSTLDQAKTQWYHFMAIVIAGMGFFTDAYDLFCISLVTKLLGRIYYTDDSKDTPGALPPNVSAAVTGVALCGTLAGQLFFGWLGDKLGRKSVYGFTLILMVVCSVASGLSFGSSAKGVVSTLCFFRFWLGFGIGGDYPLSATIMSEYANKRTRGAFIAAVFAMQGFGILFGAIVALAVSAGFRHAYPAPSYSDNHAASLVPQADYVWRIILMFGTVPAALTYYWRMKMPETARYTALIARNAKQAAADMSKVLHTQIEESADRAETVAVGGESWGLFSRQFLRRHGLHLLATTSTWFLLDIAFYSQNLFQKDIFSKVGWIPPAKTMNALEELYRIARAQALIALCGTIPGYWFTVAFIEIMGRFWIQIMGFAMMTAFMLGLAIPYHHWTTPGHHTGFIVMYGFTFFFANFGPNSTTFIVPAEIYPARLRSTCHGISAAAGKAGAIIGAFGFLYAAQDQHKPEPGYPRGIGIKNALFVLAGTNFLGTIMTLLVPESKGMSLEVISQEVADGDDEEAAYPK.

Residues 1-21 (MAGGQLNVLSTLDQAKTQWYH) lie on the Cytoplasmic side of the membrane. Residues 22–42 (FMAIVIAGMGFFTDAYDLFCI) form a helical membrane-spanning segment. The Extracellular segment spans residues 43–70 (SLVTKLLGRIYYTDDSKDTPGALPPNVS). A helical membrane pass occupies residues 71 to 91 (AAVTGVALCGTLAGQLFFGWL). Residues 92-99 (GDKLGRKS) lie on the Cytoplasmic side of the membrane. Residues 100–120 (VYGFTLILMVVCSVASGLSFG) form a helical membrane-spanning segment. Topologically, residues 121-124 (SSAK) are extracellular. The chain crosses the membrane as a helical span at residues 125-145 (GVVSTLCFFRFWLGFGIGGDY). Topologically, residues 146–163 (PLSATIMSEYANKRTRGA) are cytoplasmic. The helical transmembrane segment at 164–184 (FIAAVFAMQGFGILFGAIVAL) threads the bilayer. Residues 185–211 (AVSAGFRHAYPAPSYSDNHAASLVPQA) are Extracellular-facing. The chain crosses the membrane as a helical span at residues 212–232 (DYVWRIILMFGTVPAALTYYW). Topologically, residues 233–292 (RMKMPETARYTALIARNAKQAAADMSKVLHTQIEESADRAETVAVGGESWGLFSRQFLRR) are cytoplasmic. A helical membrane pass occupies residues 293 to 313 (HGLHLLATTSTWFLLDIAFYS). The Extracellular segment spans residues 314 to 348 (QNLFQKDIFSKVGWIPPAKTMNALEELYRIARAQA). Residues 349-369 (LIALCGTIPGYWFTVAFIEIM) traverse the membrane as a helical segment. The Cytoplasmic portion of the chain corresponds to 370–371 (GR). A helical transmembrane segment spans residues 372–392 (FWIQIMGFAMMTAFMLGLAIP). Residues 393–405 (YHHWTTPGHHTGF) are Extracellular-facing. Residues 406–426 (IVMYGFTFFFANFGPNSTTFI) form a helical membrane-spanning segment. The Cytoplasmic portion of the chain corresponds to 427–442 (VPAEIYPARLRSTCHG). The chain crosses the membrane as a helical span at residues 443-463 (ISAAAGKAGAIIGAFGFLYAA). Over 464 to 481 (QDQHKPEPGYPRGIGIKN) the chain is Extracellular. A helical membrane pass occupies residues 482–502 (ALFVLAGTNFLGTIMTLLVPE). The Cytoplasmic portion of the chain corresponds to 503-527 (SKGMSLEVISQEVADGDDEEAAYPK).

Belongs to the major facilitator superfamily. Phosphate:H(+) symporter (TC 2.A.1.9) family. As to expression, expressed in roots, stems and leaves.

The protein resides in the membrane. Functionally, high-affinity transporter for external inorganic phosphate. Required for phosphate acquisition in plant. The polypeptide is Inorganic phosphate transporter 1-1 (PHT1-1) (Oryza sativa subsp. japonica (Rice)).